A 261-amino-acid chain; its full sequence is uncharacterized protein (261 aa).

The next 2 helical transmembrane spans lie at 4–21 (RLIA…LIVL) and 33–55 (FSIL…LVLF).

Its subcellular location is the cell membrane. This is an uncharacterized protein from Archaeoglobus fulgidus (strain ATCC 49558 / DSM 4304 / JCM 9628 / NBRC 100126 / VC-16).